The primary structure comprises 312 residues: Acetyl-coenzyme A carboxylase carboxyl transferase subunit alpha (312 aa).

One can recognise a CoA carboxyltransferase C-terminal domain in the interval 36 to 286; the sequence is RLDKEVKSIY…KEYFLDALRT (251 aa).

This sequence belongs to the AccA family. Acetyl-CoA carboxylase is a heterohexamer composed of biotin carboxyl carrier protein (AccB), biotin carboxylase (AccC) and two subunits each of ACCase subunit alpha (AccA) and ACCase subunit beta (AccD).

Its subcellular location is the cytoplasm. The enzyme catalyses N(6)-carboxybiotinyl-L-lysyl-[protein] + acetyl-CoA = N(6)-biotinyl-L-lysyl-[protein] + malonyl-CoA. It functions in the pathway lipid metabolism; malonyl-CoA biosynthesis; malonyl-CoA from acetyl-CoA: step 1/1. Component of the acetyl coenzyme A carboxylase (ACC) complex. First, biotin carboxylase catalyzes the carboxylation of biotin on its carrier protein (BCCP) and then the CO(2) group is transferred by the carboxyltransferase to acetyl-CoA to form malonyl-CoA. This Helicobacter pylori (strain Shi470) protein is Acetyl-coenzyme A carboxylase carboxyl transferase subunit alpha.